A 316-amino-acid chain; its full sequence is 4-hydroxy-3-methylbut-2-enyl diphosphate reductase (316 aa).

Residue Cys18 participates in [4Fe-4S] cluster binding. Positions 47 and 80 each coordinate (2E)-4-hydroxy-3-methylbut-2-enyl diphosphate. His47 and His80 together coordinate dimethylallyl diphosphate. Residues His47 and His80 each contribute to the isopentenyl diphosphate site. Cys102 lines the [4Fe-4S] cluster pocket. His130 serves as a coordination point for (2E)-4-hydroxy-3-methylbut-2-enyl diphosphate. His130 is a binding site for dimethylallyl diphosphate. His130 contributes to the isopentenyl diphosphate binding site. Catalysis depends on Glu132, which acts as the Proton donor. (2E)-4-hydroxy-3-methylbut-2-enyl diphosphate is bound at residue Thr171. Cys201 contributes to the [4Fe-4S] cluster binding site. The (2E)-4-hydroxy-3-methylbut-2-enyl diphosphate site is built by Ser229, Ser230, Asn231, and Ser274. The dimethylallyl diphosphate site is built by Ser229, Ser230, Asn231, and Ser274. 4 residues coordinate isopentenyl diphosphate: Ser229, Ser230, Asn231, and Ser274.

This sequence belongs to the IspH family. The cofactor is [4Fe-4S] cluster.

It carries out the reaction isopentenyl diphosphate + 2 oxidized [2Fe-2S]-[ferredoxin] + H2O = (2E)-4-hydroxy-3-methylbut-2-enyl diphosphate + 2 reduced [2Fe-2S]-[ferredoxin] + 2 H(+). The catalysed reaction is dimethylallyl diphosphate + 2 oxidized [2Fe-2S]-[ferredoxin] + H2O = (2E)-4-hydroxy-3-methylbut-2-enyl diphosphate + 2 reduced [2Fe-2S]-[ferredoxin] + 2 H(+). It participates in isoprenoid biosynthesis; dimethylallyl diphosphate biosynthesis; dimethylallyl diphosphate from (2E)-4-hydroxy-3-methylbutenyl diphosphate: step 1/1. The protein operates within isoprenoid biosynthesis; isopentenyl diphosphate biosynthesis via DXP pathway; isopentenyl diphosphate from 1-deoxy-D-xylulose 5-phosphate: step 6/6. Functionally, catalyzes the conversion of 1-hydroxy-2-methyl-2-(E)-butenyl 4-diphosphate (HMBPP) into a mixture of isopentenyl diphosphate (IPP) and dimethylallyl diphosphate (DMAPP). Acts in the terminal step of the DOXP/MEP pathway for isoprenoid precursor biosynthesis. The chain is 4-hydroxy-3-methylbut-2-enyl diphosphate reductase from Ruegeria sp. (strain TM1040) (Silicibacter sp.).